A 296-amino-acid chain; its full sequence is MPWLQIRINTTPDHVPAFEDTLLDCGAMVVTFEDVHDDPVYEPDLNTTPLWKNTKVTGLFEADADIEHIRPVIEHKAESLGETDIDMKIEIVEDKDWEREWMDNYHPIQFGERLWVCPSWREVPDPNAVTLMLDPGLAFGTGTHPTTALCLQWLDSIDCKDKTIIDYGCGSGILGIAGLLLGANNMVGIDIDPQAVQATEANAERNKIDPSRLEVKLPPYESDLQADIVVANILAGPLAHLAPTISALVKNQGQLALSGILANQAQEVIEAYQEWFTIDSITEKEEWVRIVGTKHA.

S-adenosyl-L-methionine-binding residues include Thr-147, Gly-168, Asp-190, and Asn-232.

The protein belongs to the methyltransferase superfamily. PrmA family.

The protein resides in the cytoplasm. It carries out the reaction L-lysyl-[protein] + 3 S-adenosyl-L-methionine = N(6),N(6),N(6)-trimethyl-L-lysyl-[protein] + 3 S-adenosyl-L-homocysteine + 3 H(+). Methylates ribosomal protein L11. The protein is Ribosomal protein L11 methyltransferase of Marinomonas sp. (strain MWYL1).